Here is an 827-residue protein sequence, read N- to C-terminus: Xanthomonalisin (827 aa).

Positions 1-23 (MKIEKTALTVAIALAMSSLSAHA) are cleaved as a signal peptide. Positions 24–237 (EDAWVSTHTQ…GPNVGTQAAA (214 aa)) are cleaved as a propeptide — removed in mature form. Residues 241–625 (AHHPQDFAAI…GKLNTYAQAN (385 aa)) form the Peptidase S53 domain. Catalysis depends on charge relay system residues Glu312, Asp316, and Ser544. Residues Asp585, Val586, Ala601, Gly603, and Asp605 each coordinate Ca(2+). Positions 635–722 (TNAPPVANFS…VTVSSSGGTG (88 aa)) constitute a PKD domain. Positions 636-827 (NAPPVANFSV…GVSLKATWTN (192 aa)) are cleaved as a propeptide — removed in mature form.

Requires Ca(2+) as cofactor. Autocatalytically processed.

It localises to the secreted. It catalyses the reaction Cleavage of casein.. Inhibited by 1,2-epoxy-3-(p-nitrophenoxy)propane (EPNP), but not by pepstatin, pepstatin Ac (S-PI) and diazoacetyl-DL-norleucine methyl ester (DAN). Not inhibited by metal ions. Its function is as follows. Pepstatin-insensitive serine-carboxyl proteinase. Shows activity on acid-denatured hemoglobin and on casein. The chain is Xanthomonalisin from Xanthomonas sp. (strain T-22).